The sequence spans 164 residues: Ubiquitin-fold modifier-conjugating enzyme 1 (164 aa).

The active-site Glycyl thioester intermediate is Cys-116.

This sequence belongs to the ubiquitin-conjugating enzyme family. UFC1 subfamily.

Its function is as follows. E2-like enzyme which forms an intermediate with UFM1 via a thioester linkage. This chain is Ubiquitin-fold modifier-conjugating enzyme 1, found in Drosophila willistoni (Fruit fly).